We begin with the raw amino-acid sequence, 354 residues long: Protein angel (354 aa).

The segment at 22–59 is disordered; the sequence is VSSQAKGASGKRKQKAKEMESSHDRNRRWTSLGNQAEG.

This sequence belongs to the CCR4/nocturin family. Ubiquitously expressed in embryos.

In Drosophila melanogaster (Fruit fly), this protein is Protein angel (angel).